The primary structure comprises 141 residues: Large ribosomal subunit protein uL11 (141 aa).

This sequence belongs to the universal ribosomal protein uL11 family. In terms of assembly, part of the ribosomal stalk of the 50S ribosomal subunit. Interacts with L10 and the large rRNA to form the base of the stalk. L10 forms an elongated spine to which L12 dimers bind in a sequential fashion forming a multimeric L10(L12)X complex. One or more lysine residues are methylated.

Forms part of the ribosomal stalk which helps the ribosome interact with GTP-bound translation factors. This Chloroherpeton thalassium (strain ATCC 35110 / GB-78) protein is Large ribosomal subunit protein uL11.